Consider the following 428-residue polypeptide: Aspartic protease 10 (428 aa).

Residues 1–16 form the signal peptide; sequence MKTFIALLALLTVVSA. Residues 72–425 form the Peptidase A1 domain; that stretch reads YMVQISLGSP…DMKSGRLGLA (354 aa). Residue D90 is part of the active site. Residues N155 and N191 are each glycosylated (N-linked (GlcNAc...) asparagine). D318 is an active-site residue. Cysteines 353 and 385 form a disulfide.

It belongs to the peptidase A1 family. Proteolytically cleaved. In terms of tissue distribution, synthesized in the intestine. When secreted in low heme conditions, localizes to neurons near the anterior and posterior regions of the body and in coelomocytes.

It is found in the secreted. Its function is as follows. Aspartic protease which plays a role in heme homeostasis and mediates inter-organ signaling between the intestine and extra-intestinal tissues when cellular heme levels are low. This Caenorhabditis elegans protein is Aspartic protease 10.